Here is a 506-residue protein sequence, read N- to C-terminus: Phase 2 flagellin (506 aa).

This sequence belongs to the bacterial flagellin family.

It localises to the secreted. The protein resides in the bacterial flagellum. In terms of biological role, flagellin is the subunit protein which polymerizes to form the filaments of bacterial flagella. The protein is Phase 2 flagellin (fljB) of Salmonella typhimurium (strain LT2 / SGSC1412 / ATCC 700720).